The primary structure comprises 484 residues: tRNA sulfurtransferase (484 aa).

A THUMP domain is found at Glu-63 to Arg-167. ATP is bound by residues Leu-185 to Ile-186, Lys-267, Gly-289, and Gln-298. An intrachain disulfide couples Cys-346 to Cys-458. The Rhodanese domain maps to Ile-406–Pro-484. Cys-458 (cysteine persulfide intermediate) is an active-site residue.

Belongs to the ThiI family.

It localises to the cytoplasm. It catalyses the reaction [ThiI sulfur-carrier protein]-S-sulfanyl-L-cysteine + a uridine in tRNA + 2 reduced [2Fe-2S]-[ferredoxin] + ATP + H(+) = [ThiI sulfur-carrier protein]-L-cysteine + a 4-thiouridine in tRNA + 2 oxidized [2Fe-2S]-[ferredoxin] + AMP + diphosphate. It carries out the reaction [ThiS sulfur-carrier protein]-C-terminal Gly-Gly-AMP + S-sulfanyl-L-cysteinyl-[cysteine desulfurase] + AH2 = [ThiS sulfur-carrier protein]-C-terminal-Gly-aminoethanethioate + L-cysteinyl-[cysteine desulfurase] + A + AMP + 2 H(+). Its pathway is cofactor biosynthesis; thiamine diphosphate biosynthesis. In terms of biological role, catalyzes the ATP-dependent transfer of a sulfur to tRNA to produce 4-thiouridine in position 8 of tRNAs, which functions as a near-UV photosensor. Also catalyzes the transfer of sulfur to the sulfur carrier protein ThiS, forming ThiS-thiocarboxylate. This is a step in the synthesis of thiazole, in the thiamine biosynthesis pathway. The sulfur is donated as persulfide by IscS. This is tRNA sulfurtransferase from Shewanella piezotolerans (strain WP3 / JCM 13877).